The following is a 449-amino-acid chain: C4-dicarboxylate transport protein 1 (449 aa).

The next 8 helical transmembrane spans lie at 16–38, 53–71, 84–106, 157–176, 197–219, 229–251, 311–333, and 358–380; these read FLQV…DLAV, MLIA…SGAG, VIYF…YSLG, ILQV…LVGE, GMIV…ARYG, LVLV…VLRL, GFSI…PLAM, and LVIL…VLVL.

The protein belongs to the dicarboxylate/amino acid:cation symporter (DAACS) (TC 2.A.23) family.

It localises to the cell inner membrane. Its function is as follows. Responsible for the transport of dicarboxylates such as succinate, fumarate, and malate from the periplasm across the membrane. This chain is C4-dicarboxylate transport protein 1 (dctA1), found in Pseudomonas aeruginosa (strain ATCC 15692 / DSM 22644 / CIP 104116 / JCM 14847 / LMG 12228 / 1C / PRS 101 / PAO1).